A 439-amino-acid polypeptide reads, in one-letter code: Probable threonine protease PRSS50 (439 aa).

Disordered regions lie at residues 1–22 (MEPWCGAEVRGQGPQGPRVPGA) and 48–130 (ERIR…TMAP). Residues 1 to 47 (MEPWCGAEVRGQGPQGPRVPGASRSRSRALLLLLLLLLLLLPRRPAG) form the signal peptide. The segment covering 9 to 21 (VRGQGPQGPRVPG) has biased composition (low complexity). The Extracellular portion of the chain corresponds to 48-415 (ERIRPRRPPR…WIWDRLSGEP (368 aa)). Residues 51 to 61 (RPRRPPRHAHP) show a composition bias toward basic residues. Positions 112–127 (QAQTNQTTTAPPNSQT) are enriched in low complexity. Residues N116 and N187 are each glycosylated (N-linked (GlcNAc...) asparagine). The 256-residue stretch at 157–412 (FCGSSHEPDP…YRPWIWDRLS (256 aa)) folds into the Peptidase S1 domain. The cysteines at positions 192 and 208 are disulfide-linked. The Charge relay system role is filled by H207. A glycan (N-linked (GlcNAc...) asparagine) is linked at N226. The Charge relay system role is filled by D260. 3 disulfide bridges follow: C294–C370, C327–C350, and C360–C388. The Charge relay system role is filled by T364. Residues 416–436 (LALPAPSRTLLLAFLLLLILL) form a helical membrane-spanning segment. At 437–439 (GTL) the chain is on the cytoplasmic side.

It belongs to the peptidase S1 family.

The protein localises to the membrane. May be involved in proteolysis through its threonine endopeptidase activity. The polypeptide is Probable threonine protease PRSS50 (Prss50) (Mus musculus (Mouse)).